The chain runs to 250 residues: MSGHSKWATIKRKKSATDQKRGNLFTKLVKEITIAAKMGGGDPAGNPRLRLAIDTARSNSMPMDNIQRAIKKGTGELEGVSYDEITYEGYGPAGIALIIETATDNKNRTVADLRHIMSRNNGSLGENGSVSWMFHRKGSIEVPGGSATEEQLMEVLLDAGLEDIGGDAEGGYTVTTDVHDLESAKKALEEAGIAYENAKMDLIPENFIELEADDARKVIKLIDALEGNDDIQAVFSNMEISEGAMDSLDE.

This sequence belongs to the TACO1 family.

It localises to the cytoplasm. This is Probable transcriptional regulatory protein Cvib_1432 from Chlorobium phaeovibrioides (strain DSM 265 / 1930) (Prosthecochloris vibrioformis (strain DSM 265)).